A 339-amino-acid chain; its full sequence is Diguanylate cyclase VdcA (339 aa).

The region spanning 206 to 339 (QQVSLIMLDI…NLGRNRVMPL (134 aa)) is the GGDEF domain. D214 serves as a coordination point for Mg(2+). N222 and D231 together coordinate substrate. A Mg(2+)-binding site is contributed by E257. Residue E257 is the Proton acceptor of the active site.

Requires Mg(2+) as cofactor.

It catalyses the reaction 2 GTP = 3',3'-c-di-GMP + 2 diphosphate. It functions in the pathway purine metabolism; 3',5'-cyclic di-GMP biosynthesis. Functionally, diguanylate cyclase (DGC) that catalyzes the synthesis of cyclic diguanylate (c-di-GMP) via the condensation of 2 GTP molecules. Is involved in the modulation of intracellular c-di-GMP levels. Cyclic-di-GMP is a second messenger which positively regulates biofilm formation and negatively regulates virulence in V.cholerae, and is proposed to play an important role in the transition from persistence in the environment to survival in the host. Overexpression of vdcA results in increased biofilm formation, and reduced motility and virulence. In Vibrio cholerae serotype O1 (strain ATCC 39315 / El Tor Inaba N16961), this protein is Diguanylate cyclase VdcA (vdcA).